The primary structure comprises 177 residues: Probable prophage lysozyme (177 aa).

The Proton donor role is filled by E35. D44 functions as the Nucleophile in the catalytic mechanism.

Belongs to the glycosyl hydrolase 24 family.

The catalysed reaction is Hydrolysis of (1-&gt;4)-beta-linkages between N-acetylmuramic acid and N-acetyl-D-glucosamine residues in a peptidoglycan and between N-acetyl-D-glucosamine residues in chitodextrins.. Functionally, essential for lysis of bacterial cell wall, by showing cell wall hydrolyzing activity. This Escherichia coli (strain K12) protein is Probable prophage lysozyme (rrrQ).